Consider the following 330-residue polypeptide: GMP reductase (330 aa).

Residue Cys-180 is the Thioimidate intermediate of the active site. 209 to 232 (LIADGGIRHNGDIAKSVRFGASMV) contacts NADP(+).

Belongs to the IMPDH/GMPR family. GuaC type 2 subfamily.

It catalyses the reaction IMP + NH4(+) + NADP(+) = GMP + NADPH + 2 H(+). Its function is as follows. Catalyzes the irreversible NADPH-dependent deamination of GMP to IMP. It functions in the conversion of nucleobase, nucleoside and nucleotide derivatives of G to A nucleotides, and in maintaining the intracellular balance of A and G nucleotides. The sequence is that of GMP reductase from Lactobacillus acidophilus (strain ATCC 700396 / NCK56 / N2 / NCFM).